Here is a 74-residue protein sequence, read N- to C-terminus: Cytochrome c oxidase assembly factor 5 (74 aa).

The CHCH domain maps to 27–65 (ESDCVVQEGKSPRQCLKEGYCNSLKYAFFECKRSVLDNR). A Cx10C motif motif is present at residues 30-41 (CVVQEGKSPRQC). 2 disulfides stabilise this stretch: C30–C57 and C41–C47. S37 bears the Phosphoserine mark. Residues 47-57 (CNSLKYAFFEC) carry the Cx9C motif motif.

Belongs to the PET191 family.

Functionally, involved in an early step of the mitochondrial complex IV assembly process. In Pongo abelii (Sumatran orangutan), this protein is Cytochrome c oxidase assembly factor 5 (Coa5).